We begin with the raw amino-acid sequence, 151 residues long: Chromophore lyase CpcS/CpeS homolog (151 aa).

The protein belongs to the CpcS/CpeS biliprotein lyase family.

The protein localises to the plastid. It is found in the chloroplast. Functionally, might function to covalently attach a chromophore to Cys residue(s) of phycobiliproteins. The sequence is that of Chromophore lyase CpcS/CpeS homolog from Gracilaria tenuistipitata var. liui (Red alga).